Here is a 247-residue protein sequence, read N- to C-terminus: DNA polymerase sliding clamp (247 aa).

This sequence belongs to the PCNA family. As to quaternary structure, homotrimer. The subunits circularize to form a toroid; DNA passes through its center. Replication factor C (RFC) is required to load the toroid on the DNA.

Its function is as follows. Sliding clamp subunit that acts as a moving platform for DNA processing. Responsible for tethering the catalytic subunit of DNA polymerase and other proteins to DNA during high-speed replication. This is DNA polymerase sliding clamp from Halobacterium salinarum (strain ATCC 29341 / DSM 671 / R1).